The sequence spans 147 residues: Hemoglobin subunit gamma (147 aa).

The region spanning 3-147 (NFTAEDKAAI…VASALASRYH (145 aa)) is the Globin domain. Residues histidine 64 and histidine 93 each coordinate heme b.

The protein belongs to the globin family. As to quaternary structure, heterotetramer of two alpha chains and two gamma chains in fetal hemoglobin (Hb F). As to expression, red blood cells.

Gamma chains make up the fetal hemoglobin F, in combination with alpha chains. The protein is Hemoglobin subunit gamma (HBG) of Lagothrix lagotricha (Brown woolly monkey).